Here is a 319-residue protein sequence, read N- to C-terminus: ATP-dependent 6-phosphofructokinase (319 aa).

An ATP-binding site is contributed by Gly11. ADP is bound at residue 21–25 (RAVVR). ATP is bound by residues 72-73 (RC) and 102-105 (GDGS). Asp103 provides a ligand contact to Mg(2+). 125–127 (TID) serves as a coordination point for substrate. Catalysis depends on Asp127, which acts as the Proton acceptor. Arg154 lines the ADP pocket. Substrate is bound by residues Arg162 and 169 to 171 (MGR). ADP contacts are provided by residues 185-187 (GAE), Arg211, and 213-215 (KKH). Residues Glu222, Arg243, and 249–252 (HIQR) contribute to the substrate site.

This sequence belongs to the phosphofructokinase type A (PFKA) family. ATP-dependent PFK group I subfamily. Prokaryotic clade 'B1' sub-subfamily. Homotetramer. It depends on Mg(2+) as a cofactor.

The protein resides in the cytoplasm. The enzyme catalyses beta-D-fructose 6-phosphate + ATP = beta-D-fructose 1,6-bisphosphate + ADP + H(+). Its pathway is carbohydrate degradation; glycolysis; D-glyceraldehyde 3-phosphate and glycerone phosphate from D-glucose: step 3/4. Allosterically activated by ADP and other diphosphonucleosides, and allosterically inhibited by phosphoenolpyruvate. Catalyzes the phosphorylation of D-fructose 6-phosphate to fructose 1,6-bisphosphate by ATP, the first committing step of glycolysis. The chain is ATP-dependent 6-phosphofructokinase from Bacillus pumilus (strain SAFR-032).